Here is a 465-residue protein sequence, read N- to C-terminus: MFTRVANFCRKVLSREESEAEQAVARPHMTIIPREQHAISRKDISENALKVLYRLNKAGYEAYLVGGGVRDLLLGKKPKDFDVTTNATPDQVRKLFRNCRLVGRRFRLAHVMFGPEIIEVATFRGHNEGSESDRTTSQRGQNGMLLRDNIFGSIEEDAQRRDFTINSLYYSVADFTVRDYVGGMQDLQEGVIRLIGNPETRYREDPVRMLRAVRFAAKLNMRISPETAEPIPRLATLLNDIPPARLFEESLKLLQAGNGFETYQQLREYHLFQPLFPTITRYFTENGDSAMERIIAQVLKNTDNRIRNEMRVNPAFLFAAMFWYPLLEMAQKIAQESGLAYYDAFALAMNDVLDEACRSLAIPKRLTTLTRDIWQLQLRMSRRQGKRAWKLMEHPKFRAAFDLLELRAQVENNTELQRLAQWWAEFQASAPPEQKGMLNELDDDPAPRRRRSRPRKRAPRREGTV.

Catalysis depends on residues Asp80, Asp82, and Asp162. Positions 430–465 (APPEQKGMLNELDDDPAPRRRRSRPRKRAPRREGTV) are disordered. The segment covering 448 to 459 (RRRRSRPRKRAP) has biased composition (basic residues).

This sequence belongs to the tRNA nucleotidyltransferase/poly(A) polymerase family.

It carries out the reaction RNA(n) + ATP = RNA(n)-3'-adenine ribonucleotide + diphosphate. Its function is as follows. Adds poly(A) tail to the 3' end of many RNAs, which usually targets these RNAs for decay. Plays a significant role in the global control of gene expression, through influencing the rate of transcript degradation, and in the general RNA quality control. In Salmonella typhi, this protein is Poly(A) polymerase I.